Here is a 102-residue protein sequence, read N- to C-terminus: Beta-defensin 116 (102 aa).

Positions 1–23 (MSVMKPCLMTIAILMILAQKTPG) are cleaved as a signal peptide. 3 disulfide bridges follow: C40–C67, C47–C61, and C51–C68. The segment at 83–102 (EDYDSNSNLSVTNSSSYSHI) is disordered. Positions 87–102 (SNSNLSVTNSSSYSHI) are enriched in low complexity.

Belongs to the beta-defensin family.

It is found in the secreted. Has antibacterial activity. The chain is Beta-defensin 116 (DEFB116) from Homo sapiens (Human).